The primary structure comprises 132 residues: UPF0102 protein Acel_1550 (132 aa).

This sequence belongs to the UPF0102 family.

The protein is UPF0102 protein Acel_1550 of Acidothermus cellulolyticus (strain ATCC 43068 / DSM 8971 / 11B).